Here is a 63-residue protein sequence, read N- to C-terminus: Large ribosomal subunit protein uL29 (63 aa).

This sequence belongs to the universal ribosomal protein uL29 family.

This is Large ribosomal subunit protein uL29 from Flavobacterium psychrophilum (strain ATCC 49511 / DSM 21280 / CIP 103535 / JIP02/86).